The sequence spans 215 residues: Dual specificity phosphatase 29 (215 aa).

Residues 53 to 201 (HVNEVWPRLH…LRELDKQLVK (149 aa)) form the Tyrosine-protein phosphatase domain. Substrate is bound at residue 145–152 (HCAMGRSR). The active-site Phosphocysteine intermediate is the Cys-146.

This sequence belongs to the protein-tyrosine phosphatase family. Non-receptor class dual specificity subfamily. As to quaternary structure, homodimer. Interacts with PRKAA2. Skeletal muscle, liver and adipose tissue.

Its subcellular location is the cytoplasm. The protein resides in the nucleus. It catalyses the reaction O-phospho-L-tyrosyl-[protein] + H2O = L-tyrosyl-[protein] + phosphate. The enzyme catalyses O-phospho-L-seryl-[protein] + H2O = L-seryl-[protein] + phosphate. The catalysed reaction is O-phospho-L-threonyl-[protein] + H2O = L-threonyl-[protein] + phosphate. In terms of biological role, dual specificity phosphatase able to dephosphorylate phosphotyrosine, phosphoserine and phosphothreonine residues within the same substrate, with a preference for phosphotyrosine as a substrate. Involved in the modulation of intracellular signaling cascades. In skeletal muscle regulates systemic glucose homeostasis by activating, AMPK, an energy sensor protein kinase. Affects MAP kinase signaling though modulation of the MAPK1/2 cascade in skeletal muscle promoting muscle cell differentiation, development and atrophy. The polypeptide is Dual specificity phosphatase 29 (Mus musculus (Mouse)).